The chain runs to 128 residues: Global transcriptional regulator Spx 1 (128 aa).

Residues Cys10 and Cys13 are joined by a disulfide bond.

The protein belongs to the ArsC family. Spx subfamily. As to quaternary structure, interacts with the C-terminal domain of the alpha subunit of the RNAP.

It localises to the cytoplasm. Global transcriptional regulator that plays a key role in stress response and exerts either positive or negative regulation of genes. Acts by interacting with the C-terminal domain of the alpha subunit of the RNA polymerase (RNAP). This interaction can enhance binding of RNAP to the promoter region of target genes and stimulate their transcription, or block interaction of RNAP with activator. This chain is Global transcriptional regulator Spx 1, found in Lactococcus lactis subsp. lactis (strain IL1403) (Streptococcus lactis).